The following is a 330-amino-acid chain: Biotin synthase (330 aa).

One can recognise a Radical SAM core domain in the interval 43 to 272; sequence FMGDKFDTCS…RAFLRFSGGR (230 aa). [4Fe-4S] cluster-binding residues include Cys-61, Cys-65, and Cys-68. [2Fe-2S] cluster contacts are provided by Ser-105, Cys-137, Cys-197, and Arg-267.

The protein belongs to the radical SAM superfamily. Biotin synthase family. Homodimer. [4Fe-4S] cluster serves as cofactor. The cofactor is [2Fe-2S] cluster.

The catalysed reaction is (4R,5S)-dethiobiotin + (sulfur carrier)-SH + 2 reduced [2Fe-2S]-[ferredoxin] + 2 S-adenosyl-L-methionine = (sulfur carrier)-H + biotin + 2 5'-deoxyadenosine + 2 L-methionine + 2 oxidized [2Fe-2S]-[ferredoxin]. It functions in the pathway cofactor biosynthesis; biotin biosynthesis; biotin from 7,8-diaminononanoate: step 2/2. In terms of biological role, catalyzes the conversion of dethiobiotin (DTB) to biotin by the insertion of a sulfur atom into dethiobiotin via a radical-based mechanism. The polypeptide is Biotin synthase (Porphyromonas gingivalis (strain ATCC 33277 / DSM 20709 / CIP 103683 / JCM 12257 / NCTC 11834 / 2561)).